The primary structure comprises 428 residues: C4-dicarboxylate transport protein (428 aa).

Helical transmembrane passes span 4-24 (SLFKSLYFQVLTAIAIGILLG), 44-64 (LIKMIIAPVIFCTVVTGIAGM), 76-96 (VALLYFEIVSTIALIIGLIIV), 142-162 (IGAFASGNILQVLLFAVLFGF), 184-204 (VIFGIINMIMRLAPIGAFGAM), 222-242 (LIICFYITCILFVVVVLGTIA), 289-309 (VVGLVIPTGYSFNLDGTSIYL), 326-346 (IFHQITLLVVLLLSSKGAAGV), and 352-372 (IVLAATISAVGHLPVAGLALI).

This sequence belongs to the dicarboxylate/amino acid:cation symporter (DAACS) (TC 2.A.23) family.

It localises to the cell inner membrane. Its function is as follows. Responsible for the transport of dicarboxylates such as succinate, fumarate, and malate from the periplasm across the membrane. The protein is C4-dicarboxylate transport protein of Salmonella arizonae (strain ATCC BAA-731 / CDC346-86 / RSK2980).